The sequence spans 501 residues: Lysine--tRNA ligase (501 aa).

Residues Glu411 and Glu418 each coordinate Mg(2+).

It belongs to the class-II aminoacyl-tRNA synthetase family. As to quaternary structure, homodimer. It depends on Mg(2+) as a cofactor.

It is found in the cytoplasm. The catalysed reaction is tRNA(Lys) + L-lysine + ATP = L-lysyl-tRNA(Lys) + AMP + diphosphate. In Clostridium perfringens (strain ATCC 13124 / DSM 756 / JCM 1290 / NCIMB 6125 / NCTC 8237 / Type A), this protein is Lysine--tRNA ligase.